Here is a 325-residue protein sequence, read N- to C-terminus: ATP-dependent 6-phosphofructokinase (325 aa).

Glycine 12 lines the ATP pocket. ADP is bound at residue 22-26 (RTIVK). ATP contacts are provided by residues 73 to 74 (RY) and 103 to 106 (GDGS). A Mg(2+)-binding site is contributed by aspartate 104. Residue 126 to 128 (TID) participates in substrate binding. Aspartate 128 serves as the catalytic Proton acceptor. Arginine 155 lines the ADP pocket. 170–172 (MGH) serves as a coordination point for substrate. ADP is bound by residues 186-188 (GAE), lysine 213, and 215-217 (KRS). Residues glutamate 224, arginine 246, and 252–255 (HTQR) each bind substrate.

It belongs to the phosphofructokinase type A (PFKA) family. ATP-dependent PFK group I subfamily. Prokaryotic clade 'B1' sub-subfamily. As to quaternary structure, homotetramer. The cofactor is Mg(2+).

Its subcellular location is the cytoplasm. The enzyme catalyses beta-D-fructose 6-phosphate + ATP = beta-D-fructose 1,6-bisphosphate + ADP + H(+). Its pathway is carbohydrate degradation; glycolysis; D-glyceraldehyde 3-phosphate and glycerone phosphate from D-glucose: step 3/4. Allosterically activated by ADP and other diphosphonucleosides, and allosterically inhibited by phosphoenolpyruvate. In terms of biological role, catalyzes the phosphorylation of D-fructose 6-phosphate to fructose 1,6-bisphosphate by ATP, the first committing step of glycolysis. The protein is ATP-dependent 6-phosphofructokinase of Mycoplasma mobile (strain ATCC 43663 / 163K / NCTC 11711) (Mesomycoplasma mobile).